The sequence spans 168 residues: Regulatory protein RecX (168 aa).

The protein belongs to the RecX family.

It localises to the cytoplasm. Modulates RecA activity. The sequence is that of Regulatory protein RecX from Serratia proteamaculans (strain 568).